A 141-amino-acid polypeptide reads, in one-letter code: AsCystatin (141 aa).

The first 26 residues, 1 to 26 (MVHSQLPVAAPLRLLCALLLLPLATM), serve as a signal peptide directing secretion. Positions 29 to 129 (GGLSPRSVTD…CRFQVWSCPW (101 aa)) constitute a Cystatin domain. Residues 73–77 (QVVTG) carry the Secondary area of contact motif. 2 disulfide bridges follow: Cys-91-Cys-107 and Cys-120-Cys-140.

It belongs to the cystatin family. Expressed at a low level by the venom gland (at protein level).

It localises to the secreted. In terms of biological role, recombinant AsCystatin inhibits various C1 cysteine proteases including cathepsin L (Ki is 0.89 pM), papain (Ki is 1.74 pM) and cathepsin B (Ki is 0.69 nM). This activity has also been observed in the crude venom. This protein has no toxic activity and its function in the venom is unknown. It may play a role as a housekeeping or regulatory protein. The polypeptide is AsCystatin (Austrelaps superbus (Lowland copperhead snake)).